A 122-amino-acid polypeptide reads, in one-letter code: Large ribosomal subunit protein uL14 (122 aa).

This sequence belongs to the universal ribosomal protein uL14 family. As to quaternary structure, part of the 50S ribosomal subunit. Forms a cluster with proteins L3 and L19. In the 70S ribosome, L14 and L19 interact and together make contacts with the 16S rRNA in bridges B5 and B8.

Binds to 23S rRNA. Forms part of two intersubunit bridges in the 70S ribosome. This is Large ribosomal subunit protein uL14 from Caulobacter vibrioides (strain ATCC 19089 / CIP 103742 / CB 15) (Caulobacter crescentus).